The following is a 142-amino-acid chain: Large ribosomal subunit protein uL13 (142 aa).

It belongs to the universal ribosomal protein uL13 family. Part of the 50S ribosomal subunit.

Functionally, this protein is one of the early assembly proteins of the 50S ribosomal subunit, although it is not seen to bind rRNA by itself. It is important during the early stages of 50S assembly. The sequence is that of Large ribosomal subunit protein uL13 from Histophilus somni (strain 2336) (Haemophilus somnus).